Consider the following 471-residue polypeptide: Phosphatidylserine synthase 2 (471 aa).

Residues 1-26 (MRRGERRVAGGSGSESPLLEGRRSTE) are disordered. The Cytoplasmic segment spans residues 1-40 (MRRGERRVAGGSGSESPLLEGRRSTESEVYDDGTNTFFWR). Phosphoserine occurs at positions 12, 14, and 16. Residues 41 to 61 (AHTLTVLFILTCALGYVTLLE) traverse the membrane as a helical segment. Over 62 to 74 (ETPQDTAYNTKRG) the chain is Lumenal. The chain crosses the membrane as a helical span at residues 75–95 (IVASILVFLCFGVTQAKDGPF). The Cytoplasmic portion of the chain corresponds to 96–104 (SRPHPAYWR). The chain crosses the membrane as a helical span at residues 105-125 (FWLCVSVVYELFLIFILFQTV). Topologically, residues 126–291 (HDGRQFLKYV…EWKPASSLHR (166 aa)) are lumenal. An N-linked (GlcNAc...) asparagine glycan is attached at asparagine 159. Residues 292–312 (WLAVCGIILVFLLAELNTFYL) form a helical membrane-spanning segment. Position 313 (lysine 313) is a topological domain, cytoplasmic. A helical membrane pass occupies residues 314–334 (FVLWMPPEHYLVLLRLVFFVN). Topologically, residues 335–354 (VGGVAMREIYDFMDELKPHR) are lumenal. Residues 355 to 375 (KLGQQAWLVAAITVTELLIVV) traverse the membrane as a helical segment. Topologically, residues 376–381 (KYDPHT) are cytoplasmic. The helical transmembrane segment at 382–402 (LTLSLPFYISQCWTLGSILVL) threads the bilayer. Residues 403–471 (TWTVWRFFLR…PAEEGPSAAS (69 aa)) are Lumenal-facing. The interval 423 to 471 (RQKQQSHQAINNGDGHPGPEDDLPGTGTAEEEGTTNDGVPAEEGPSAAS) is disordered.

The protein belongs to the phosphatidyl serine synthase family.

It localises to the endoplasmic reticulum membrane. The catalysed reaction is a 1,2-diacyl-sn-glycero-3-phosphoethanolamine + L-serine = a 1,2-diacyl-sn-glycero-3-phospho-L-serine + ethanolamine. The enzyme catalyses 1-hexadecanoyl-2-(9Z-octadecenoyl)-sn-glycero-3-phosphoethanolamine + L-serine = 1-hexadecanoyl-2-(9Z-octadecenoyl)-sn-glycero-3-phospho-L-serine + ethanolamine. It carries out the reaction 1-hexadecanoyl-2-(4Z,7Z,10Z,13Z,16Z,19Z-docosahexaenoyl)-sn-glycero-3-phosphoethanolamine + L-serine = 1-hexadecanoyl-2-(4Z,7Z,10Z,13Z,16Z,19Z-docosahexaenoyl)-sn-glycero-3-phosphoserine + ethanolamine. It catalyses the reaction 1-octadecanoyl-2-(5Z,8Z,11Z,14Z)-eicosatetraenoyl-sn-glycero-3-phosphoethanolamine + L-serine = 1-octadecanoyl-2-(5Z,8Z,11Z,14Z)-eicosatetraenoyl-sn-glycero-3-phosphoserine + ethanolamine. The catalysed reaction is 1-octadecanoyl-2-(4Z,7Z,10Z,13Z,16Z,19Z-docosahexaenoyl)-sn-glycero-3-phosphoethanolamine + L-serine = 1-octadecanoyl-2-(4Z,7Z,10Z,13Z,16Z,19Z-docosahexaenoyl)-sn-glycero-3-phosphoserine + ethanolamine. The enzyme catalyses 1-(1Z-octadecenyl)-2-(4Z,7Z,10Z,13Z,16Z,19Z-docosahexaenoyl)-sn-glycero-3-phosphoethanolamine + L-serine = 1-(1Z-octadecenyl)-2-(4Z,7Z,10Z,13Z,16Z,19Z-docosahexaenoyl)-sn-glycero-3-phospho-L-serine + ethanolamine. It carries out the reaction 1-octadecanoyl-2-(9Z-octadecenoyl)-sn-glycero-3-phosphoethanolamine + L-serine = 1-octadecanoyl-2-(9Z-octadecenoyl)-sn-glycero-3-phospho-L-serine + ethanolamine. It catalyses the reaction 1-(1Z-octadecenyl)-2-(9Z-octadecenoyl)-sn-glycero-3-phosphoethanolamine + L-serine = 1-(1Z-octadecenyl)-2-(9Z-octadecenoyl)-sn-glycero-3-phospho-L-serine + ethanolamine. The catalysed reaction is 1-(1Z-octadecenyl)-2-(5Z,8Z,11Z,14Z- eicosatetraenoyl)-sn-glycero-3-phosphoethanolamine + L-serine = 1-(1Z-octadecenyl)-2-(5Z,8Z,11Z,14Z-eicosatetraenoyl)-sn-glycero-3-phospho-L-serine + ethanolamine. It participates in phospholipid metabolism; phosphatidylserine biosynthesis. Its function is as follows. Catalyzes a base-exchange reaction in which the polar head group of phosphatidylethanolamine (PE) or phosphatidylcholine (PC) is replaced by L-serine. Catalyzes the conversion of phosphatatidylethanolamine and does not act on phosphatidylcholine. Can utilize both phosphatidylethanolamine (PE) plasmalogen and diacyl PE as substrate and the latter is six times better utilized, indicating the importance of an ester linkage at the sn-1 position. Although it shows no sn-1 fatty acyl preference, exhibits significant preference towards docosahexaenoic acid (22:6n-3) compared with 18:1 or 20:4 at the sn-2 position. The polypeptide is Phosphatidylserine synthase 2 (Ptdss2) (Rattus norvegicus (Rat)).